We begin with the raw amino-acid sequence, 1639 residues long: RIMS-binding protein 3B (1639 aa).

Disordered stretches follow at residues 1 to 22 (MAKD…SSPA), 215 to 240 (GSPD…CHAP), and 295 to 364 (SLDS…LTPS). A coiled-coil region spans residues 21-143 (PAAAVLENQR…ELQRQLAEEL (123 aa)). Residues 326-339 (SPPPSPLPPPPPPS) show a composition bias toward pro residues. Coiled-coil stretches lie at residues 409-442 (QADE…QETN) and 480-619 (LAKD…AEEN). Residues 697 to 811 (CRPGHPPEQP…DRDTASEVDD (115 aa)) are disordered. Polar residues-rich tracts occupy residues 707–718 (WETSQMPESQVK) and 761–775 (SVPQ…SQPL). Residues 776–790 (SKKTSSQSNSSSEGS) show a composition bias toward low complexity. Residues 832-899 (PKLKIFMAQY…PSNFVEQIPD (68 aa)) enclose the SH3 1 domain. 2 Fibronectin type-III domains span residues 995–1083 (APMQ…TLLA) and 1088–1184 (PPLE…IPED). Disordered stretches follow at residues 1251–1273 (PRRQ…GAGS), 1292–1325 (QKSP…SPAP), and 1392–1413 (GTER…QALG). Over residues 1293 to 1305 (KSPQNHRPPSVSD) the composition is skewed to polar residues. Residues 1392–1406 (GTERREERREPEPHS) show a composition bias toward basic and acidic residues. SH3 domains follow at residues 1452-1520 (TPAR…EMEV) and 1569-1636 (WTPK…HMSL).

This sequence belongs to the RIMBP family. Interacts with LRGUK (via guanylate kinase-like domain). Interacts (via C-terminus) with HOOK1 (via coiled-coil region).

The protein localises to the cytoplasm. Its subcellular location is the cytoskeleton. Functionally, probable component of the manchette, a microtubule-based structure which plays a key role in sperm head morphogenesis during late stages of sperm development. The chain is RIMS-binding protein 3B (RIMBP3B) from Homo sapiens (Human).